The primary structure comprises 165 residues: Thiol peroxidase (165 aa).

Residues 18 to 165 (PAVGSPAPAF…YEAALAALGA (148 aa)) enclose the Thioredoxin domain. Residue cysteine 60 is the Cysteine sulfenic acid (-SOH) intermediate of the active site. A disulfide bridge links cysteine 60 with cysteine 93.

It belongs to the peroxiredoxin family. Tpx subfamily. As to quaternary structure, homodimer.

It carries out the reaction a hydroperoxide + [thioredoxin]-dithiol = an alcohol + [thioredoxin]-disulfide + H2O. Functionally, thiol-specific peroxidase that catalyzes the reduction of hydrogen peroxide and organic hydroperoxides to water and alcohols, respectively. Plays a role in cell protection against oxidative stress by detoxifying peroxides. The chain is Thiol peroxidase from Mycobacterium bovis (strain ATCC BAA-935 / AF2122/97).